The following is a 63-amino-acid chain: Sec-independent protein translocase protein TatA (63 aa).

A helical transmembrane segment spans residues 1 to 21 (MGSLSMWHWLIVLVIVLLLFG). The segment at 43–63 (MTDEDAPETAKTVDHKADETK) is disordered. Residues 53–63 (KTVDHKADETK) show a composition bias toward basic and acidic residues.

It belongs to the TatA/E family. The Tat system comprises two distinct complexes: a TatABC complex, containing multiple copies of TatA, TatB and TatC subunits, and a separate TatA complex, containing only TatA subunits. Substrates initially bind to the TatABC complex, which probably triggers association of the separate TatA complex to form the active translocon.

Its subcellular location is the cell inner membrane. Functionally, part of the twin-arginine translocation (Tat) system that transports large folded proteins containing a characteristic twin-arginine motif in their signal peptide across membranes. TatA could form the protein-conducting channel of the Tat system. The chain is Sec-independent protein translocase protein TatA from Rhizobium etli (strain ATCC 51251 / DSM 11541 / JCM 21823 / NBRC 15573 / CFN 42).